Reading from the N-terminus, the 315-residue chain is Coproporphyrin III ferrochelatase (315 aa).

Residues tyrosine 13, arginine 30, 46–47, serine 54, and tyrosine 125 each bind Fe-coproporphyrin III; that span reads RY. Positions 183 and 264 each coordinate Fe(2+).

Belongs to the ferrochelatase family.

The protein localises to the cytoplasm. The enzyme catalyses Fe-coproporphyrin III + 2 H(+) = coproporphyrin III + Fe(2+). It participates in porphyrin-containing compound metabolism; protoheme biosynthesis. In terms of biological role, involved in coproporphyrin-dependent heme b biosynthesis. Catalyzes the insertion of ferrous iron into coproporphyrin III to form Fe-coproporphyrin III. The sequence is that of Coproporphyrin III ferrochelatase from Anoxybacillus flavithermus (strain DSM 21510 / WK1).